A 737-amino-acid chain; its full sequence is MNLPWALLLVLLSHRQLLPWLRTVGETSLNDFYSEAQAKLFLQFYEQTAQVVLNEFMEATWNYVTNITKQNQKNMLQKEADRSQFMLYFSTRARMFRTDHFLNQDVKRMLRKLQNIDKSALPTEDLLEYNRLLTYMETAYNRAEVCLDEGPCLTLEPDLQEIMATSRDQKELLWAWQGWRDAVGRQLRPVFEDYVRLSNKAAQYNGYKDMGALWRSKYESDTLEEDLEQLYKELQPLYLNLHAYVRRSLYRYYGPELIDLRGPIPAHLLGNMWAQSWNNILDLVLPYPTKAPEDITAIMKIQHWRPEKMFEEANLFFTSMGMLPAPPAFWIKSMMEKPADGREVECHTSSWNFYKFNDFRVKKCTEVTLEDLLSVFHQMGHIQYFLQYQNLSVIYQEGASPAFEEAVGSVIALSVSSHKYLLARGLLSQPHQDSEEEVNFLLGIALEKIAFIPFSYLVDKFRWKIFDGTISKITYNQEWWNFRLKYQGLCPPVPRSDDDFDPGAKFHIPANVPYIRYFLGLILQFQLHEALCEASGHVGPLHQCDNYNSKVAGKILGDLLKLGSSRPWREVLQEVTGESNISTKAFLTYFKPLMDWLVTENVKQGDTLGWPDFSCSFEEKITSKVSFLGTDTEPEQAYLGQWVLLSMSFFMLVLILALGFRLHYLEKQLLDEDTMILKTLPYSYFLGIAMEPHQAARKQWLLLGLCCILMLCCIGLLIRIVTQNTENTPWMKNEGQS.

An N-terminal signal peptide occupies residues 1–23 (MNLPWALLLVLLSHRQLLPWLRT). At 24–639 (VGETSLNDFY…TDTEPEQAYL (616 aa)) the chain is on the extracellular side. The Peptidase M2 domain maps to 32–611 (FYSEAQAKLF…VKQGDTLGWP (580 aa)). Residues Cys146 and Cys152 are joined by a disulfide bond. Positions 180 and 218 each coordinate chloride. A disulfide bond links Cys346 and Cys364. Residues His377 and His381 each contribute to the Zn(2+) site. N-linked (GlcNAc...) asparagine glycosylation is present at Asn390. Glu405 serves as a coordination point for Zn(2+). Positions 479, 483, and 516 each coordinate chloride. A disulfide bridge connects residues Cys532 and Cys544. The chain crosses the membrane as a helical span at residues 640-660 (GQWVLLSMSFFMLVLILALGF). The Cytoplasmic portion of the chain corresponds to 661 to 700 (RLHYLEKQLLDEDTMILKTLPYSYFLGIAMEPHQAARKQW). Residues 701–721 (LLLGLCCILMLCCIGLLIRIV) traverse the membrane as a helical segment. Topologically, residues 722-737 (TQNTENTPWMKNEGQS) are extracellular.

This sequence belongs to the peptidase M2 family. As to quaternary structure, interacts with IZUMO1. Zn(2+) is required as a cofactor. Expressed in sperm and testis (at protein level). Expressed in heart and testis. Not detected in kidney, lung, liver, brain, ovary, spleen and thymus.

It localises to the cytoplasmic vesicle. The protein resides in the secretory vesicle. It is found in the acrosome membrane. The sequence is that of Angiotensin-converting enzyme-like protein Ace3 from Mus musculus (Mouse).